The chain runs to 434 residues: Serine/threonine transporter SstT (434 aa).

The next 9 membrane-spanning stretches (helical) occupy residues 14 to 34 (IVIGIIVGAVLGVMVPSWSFI), 41 to 61 (FVGALKAIAPLLVFLLIMSAI), 72 to 92 (FGTVIVLYLSATLFSSIAAVA), 135 to 155 (ALVEGNYLAILFWSLLIGSGL), 172 to 192 (TVSAVAQNVIQFAPFGIVGLL), 210 to 230 (LLMLLVATMVFVYLVVYPFMV), 282 to 302 (ISIPLGGSANSGGAAITVSIM), 316 to 336 (IFLALLLCFLSAISATGVSGI), and 351 to 371 (FGISNDIAMQVVGIGFIIGVV). Positions 413–434 (GKGTAEVVTPEKTNEAEESEQV) are disordered.

It belongs to the dicarboxylate/amino acid:cation symporter (DAACS) (TC 2.A.23) family.

Its subcellular location is the cell membrane. The catalysed reaction is L-serine(in) + Na(+)(in) = L-serine(out) + Na(+)(out). The enzyme catalyses L-threonine(in) + Na(+)(in) = L-threonine(out) + Na(+)(out). Its function is as follows. Involved in the import of serine and threonine into the cell, with the concomitant import of sodium (symport system). The chain is Serine/threonine transporter SstT from Lacticaseibacillus casei (strain BL23) (Lactobacillus casei).